Here is a 413-residue protein sequence, read N- to C-terminus: Multifunctional CCA protein (413 aa).

Residues Gly-8 and Arg-11 each coordinate ATP. Positions 8 and 11 each coordinate CTP. 2 residues coordinate Mg(2+): Asp-21 and Asp-23. Residues Arg-91, Arg-137, and Arg-140 each contribute to the ATP site. CTP is bound by residues Arg-91, Arg-137, and Arg-140. One can recognise an HD domain in the interval Thr-228–Trp-329.

The protein belongs to the tRNA nucleotidyltransferase/poly(A) polymerase family. Bacterial CCA-adding enzyme type 1 subfamily. As to quaternary structure, monomer. Can also form homodimers and oligomers. Requires Mg(2+) as cofactor. The cofactor is Ni(2+).

The enzyme catalyses a tRNA precursor + 2 CTP + ATP = a tRNA with a 3' CCA end + 3 diphosphate. It carries out the reaction a tRNA with a 3' CCA end + 2 CTP + ATP = a tRNA with a 3' CCACCA end + 3 diphosphate. In terms of biological role, catalyzes the addition and repair of the essential 3'-terminal CCA sequence in tRNAs without using a nucleic acid template. Adds these three nucleotides in the order of C, C, and A to the tRNA nucleotide-73, using CTP and ATP as substrates and producing inorganic pyrophosphate. tRNA 3'-terminal CCA addition is required both for tRNA processing and repair. Also involved in tRNA surveillance by mediating tandem CCA addition to generate a CCACCA at the 3' terminus of unstable tRNAs. While stable tRNAs receive only 3'-terminal CCA, unstable tRNAs are marked with CCACCA and rapidly degraded. This Aeromonas salmonicida (strain A449) protein is Multifunctional CCA protein.